Consider the following 346-residue polypeptide: Holliday junction branch migration complex subunit RuvB (346 aa).

Residues 1–182 (MSEPARLISP…FGIPVRLTFY (182 aa)) form a large ATPase domain (RuvB-L) region. ATP-binding positions include Leu-21, Arg-22, Gly-63, Lys-66, Thr-67, Thr-68, 129 to 131 (EDY), Arg-172, Tyr-182, and Arg-219. Mg(2+) is bound at residue Thr-67. Positions 183-253 (TVEELELIVR…IADEALTRLL (71 aa)) are small ATPAse domain (RuvB-S). The tract at residues 256–346 (NVGFDQLDKR…AQFRLFQEDD (91 aa)) is head domain (RuvB-H). Residues Arg-292, Arg-311, and Arg-316 each coordinate DNA.

The protein belongs to the RuvB family. As to quaternary structure, homohexamer. Forms an RuvA(8)-RuvB(12)-Holliday junction (HJ) complex. HJ DNA is sandwiched between 2 RuvA tetramers; dsDNA enters through RuvA and exits via RuvB. An RuvB hexamer assembles on each DNA strand where it exits the tetramer. Each RuvB hexamer is contacted by two RuvA subunits (via domain III) on 2 adjacent RuvB subunits; this complex drives branch migration. In the full resolvosome a probable DNA-RuvA(4)-RuvB(12)-RuvC(2) complex forms which resolves the HJ.

The protein resides in the cytoplasm. It carries out the reaction ATP + H2O = ADP + phosphate + H(+). Functionally, the RuvA-RuvB-RuvC complex processes Holliday junction (HJ) DNA during genetic recombination and DNA repair, while the RuvA-RuvB complex plays an important role in the rescue of blocked DNA replication forks via replication fork reversal (RFR). RuvA specifically binds to HJ cruciform DNA, conferring on it an open structure. The RuvB hexamer acts as an ATP-dependent pump, pulling dsDNA into and through the RuvAB complex. RuvB forms 2 homohexamers on either side of HJ DNA bound by 1 or 2 RuvA tetramers; 4 subunits per hexamer contact DNA at a time. Coordinated motions by a converter formed by DNA-disengaged RuvB subunits stimulates ATP hydrolysis and nucleotide exchange. Immobilization of the converter enables RuvB to convert the ATP-contained energy into a lever motion, pulling 2 nucleotides of DNA out of the RuvA tetramer per ATP hydrolyzed, thus driving DNA branch migration. The RuvB motors rotate together with the DNA substrate, which together with the progressing nucleotide cycle form the mechanistic basis for DNA recombination by continuous HJ branch migration. Branch migration allows RuvC to scan DNA until it finds its consensus sequence, where it cleaves and resolves cruciform DNA. This Rhizobium etli (strain ATCC 51251 / DSM 11541 / JCM 21823 / NBRC 15573 / CFN 42) protein is Holliday junction branch migration complex subunit RuvB.